A 219-amino-acid polypeptide reads, in one-letter code: Outer spore wall protein 4 (219 aa).

An N-terminal signal peptide occupies residues 1 to 19 (MRFQLFIYFYFTIVVIAGT). The Extracellular portion of the chain corresponds to 20–170 (NTIQQFSDAG…KKKRLDRIKR (151 aa)). N-linked (GlcNAc...) asparagine glycans are attached at residues Asn-42, Asn-62, and Asn-136. Residues 171–191 (ILTVSLLELGLAQGVADLCAV) form a helical membrane-spanning segment. The Cytoplasmic segment spans residues 192 to 193 (AP). A helical transmembrane segment spans residues 194 to 214 (FACLLGVTVGSIGFIFWLALI). Over 215–219 (YNAIQ) the chain is Extracellular.

Belongs to the OSW4/6 family. In terms of processing, N-glycosylated.

Its subcellular location is the membrane. Its function is as follows. Involved in spore wall assembly. May be involved in maintaining genome integrity. This Saccharomyces cerevisiae (strain ATCC 204508 / S288c) (Baker's yeast) protein is Outer spore wall protein 4.